A 936-amino-acid polypeptide reads, in one-letter code: Protein NLP2 (936 aa).

Residues 99-130 (IMSVNPTEAEKTGKSSGELGSDDGAHQGSSMV) are disordered. One can recognise an RWP-RK domain in the interval 550 to 635 (QPSSIGHAEK…INSVHGVDRS (86 aa)). Disordered regions lie at residues 666 to 697 (PSVG…SCQL), 753 to 782 (CTNP…IQQE), and 794 to 827 (DKDH…RSAL). Residues 671-682 (TVEENSDLKSEE) show a composition bias toward basic and acidic residues. The span at 688–697 (DGSQRQSCQL) shows a compositional bias: polar residues. Positions 754 to 769 (TNPSSSLRPSSESTRN) are enriched in low complexity. The span at 770-781 (QIVGRNSPSIQQ) shows a compositional bias: polar residues. Residues 801–815 (STSGMTDSSSGSASS) show a composition bias toward low complexity. Over residues 816–825 (HPTFKQNTRS) the composition is skewed to polar residues. One can recognise a PB1 domain in the interval 834–916 (ALTVKATYNG…RIVKLQVRDL (83 aa)).

It localises to the nucleus. Probable transcription factor. The sequence is that of Protein NLP2 from Oryza sativa subsp. japonica (Rice).